The chain runs to 103 residues: Putative ribosomal RNA-processing protein 7 homolog B (103 aa).

Over residues 1 to 19 the composition is skewed to basic and acidic residues; sequence MEAYDQKIAEEEAKAKEEE. A disordered region spans residues 1–25; it reads MEAYDQKIAEEEAKAKEEEGVPDEE. Positions 71 to 100 form a coiled coil; the sequence is ESKMEHLAQLRKKFEEDKQRIELLRAQRKF.

It belongs to the RRP7 family.

This Homo sapiens (Human) protein is Putative ribosomal RNA-processing protein 7 homolog B.